A 684-amino-acid polypeptide reads, in one-letter code: Threonine--tRNA ligase (684 aa).

Positions methionine 1–alanine 66 constitute a TGS domain. The interval aspartate 261–proline 567 is catalytic. Residues cysteine 366, histidine 417, and histidine 544 each contribute to the Zn(2+) site.

Belongs to the class-II aminoacyl-tRNA synthetase family. Homodimer. It depends on Zn(2+) as a cofactor.

It is found in the cytoplasm. The enzyme catalyses tRNA(Thr) + L-threonine + ATP = L-threonyl-tRNA(Thr) + AMP + diphosphate + H(+). Its function is as follows. Catalyzes the attachment of threonine to tRNA(Thr) in a two-step reaction: L-threonine is first activated by ATP to form Thr-AMP and then transferred to the acceptor end of tRNA(Thr). Also edits incorrectly charged L-seryl-tRNA(Thr). The polypeptide is Threonine--tRNA ligase (Mycolicibacterium smegmatis (strain ATCC 700084 / mc(2)155) (Mycobacterium smegmatis)).